The following is a 170-amino-acid chain: Cathelicidin antimicrobial peptide (170 aa).

The signal sequence occupies residues 1–30; sequence MKTQRDSPSLGRWSLVLLLLGLVMPLAIVA. A propeptide spans 31–131 (cathelin-like domain (CLD)); sequence QVLSYQEAVL…DISCDKDNRR (101 aa). 2 disulfide bridges follow: cysteine 86–cysteine 97 and cysteine 108–cysteine 125. The segment at 150-162 is active core; the sequence is FKRIVQRIKDFLQ.

The protein belongs to the cathelicidin family. As to quaternary structure, monomer, homodimer or homotrimer (in vitro). Oligomerizes as tetra- or hexamer in solution (in vitro). In terms of processing, proteolytically cleaved by proteinase PRTN3 into antibacterial peptide LL-37. Proteolytically cleaved by cathepsin CTSG and neutrophil elastase ELANE. Resistant to proteolytic degradation in solution, and when bound to both zwitterionic (mimicking mammalian membranes) and negatively charged membranes (mimicking bacterial membranes). Post-translationally, after secretion onto the skin surface, the CAMP gene product is processed by a serine protease-dependent mechanism into multiple novel antimicrobial peptides distinct from and shorter than cathelicidin LL-37. These peptides show enhanced antimicrobial action, acquiring the ability to kill skin pathogens such as S.aureus, E.coli and C.albicans. These peptides have lost the ability to stimulate CXCL8/IL8 release from keratinocytes. The peptides act synergistically, killing bacteria at lower concentrations when present together, and maintain activity at increased salt condition.

It localises to the secreted. The protein localises to the vesicle. Its function is as follows. Antimicrobial protein that is an integral component of the innate immune system. Binds to bacterial lipopolysaccharides (LPS). Acts via neutrophil N-formyl peptide receptors to enhance the release of CXCL2. Postsecretory processing generates multiple cathelicidin antimicrobial peptides with various lengths which act as a topical antimicrobial defense in sweat on skin. The unprocessed precursor form, cathelicidin antimicrobial peptide, inhibits the growth of Gram-negative E.coli and E.aerogenes with efficiencies comparable to that of the mature peptide LL-37 (in vitro). In terms of biological role, antimicrobial peptide that is an integral component of the innate immune system. Binds to bacterial lipopolysaccharides (LPS). Causes membrane permeabilization by forming transmembrane pores (in vitro). Causes lysis of E.coli. Exhibits antimicrobial activity against Gram-negative bacteria such as P.aeruginosa, S.typhimurium, E.aerogenes, E.coli and P.syringae, Gram-positive bacteria such as L.monocytogenes, S.epidermidis, S.pyogenes and S.aureus, as well as vancomycin-resistant enterococci (in vitro). Exhibits antimicrobial activity against methicillin-resistant S.aureus, P.mirabilis, and C.albicans in low-salt media, but not in media containing 100 mM NaCl (in vitro). Forms chiral supramolecular assemblies with quinolone signal (PQS) molecules of P.aeruginosa, which may lead to interference of bacterial quorum signaling and perturbance of bacterial biofilm formation. May form supramolecular fiber-like assemblies on bacterial membranes. Induces cytokine and chemokine producation as well as TNF/TNFA and CSF2/GMCSF production in normal human keratinocytes. Exhibits hemolytic activity against red blood cells. Exhibits antimicrobial activity against E.coli and B.megaterium (in vitro). The chain is Cathelicidin antimicrobial peptide from Nomascus concolor (Black crested gibbon).